Consider the following 308-residue polypeptide: Cytochrome b (308 aa).

A run of 4 helical transmembrane segments spans residues 1–21 (FGSL…LLAT), 45–66 (WLIR…YIHI), 81–101 (WNVG…GYVL), and 146–166 (FFAL…VHLT). Residues His-51 and His-65 each coordinate heme b. His-150 and His-164 together coordinate heme b. His-169 contacts a ubiquinone. 3 helical membrane passes run 194–214 (MKDI…ALFS), 256–276 (LGGV…PLLH), and 288–308 (LSQI…WVGS).

It belongs to the cytochrome b family. As to quaternary structure, the cytochrome bc1 complex contains 11 subunits: 3 respiratory subunits (MT-CYB, CYC1 and UQCRFS1), 2 core proteins (UQCRC1 and UQCRC2) and 6 low-molecular weight proteins (UQCRH/QCR6, UQCRB/QCR7, UQCRQ/QCR8, UQCR10/QCR9, UQCR11/QCR10 and a cleavage product of UQCRFS1). This cytochrome bc1 complex then forms a dimer. Heme b serves as cofactor.

Its subcellular location is the mitochondrion inner membrane. Functionally, component of the ubiquinol-cytochrome c reductase complex (complex III or cytochrome b-c1 complex) that is part of the mitochondrial respiratory chain. The b-c1 complex mediates electron transfer from ubiquinol to cytochrome c. Contributes to the generation of a proton gradient across the mitochondrial membrane that is then used for ATP synthesis. In Ptiloprora plumbea (Leaden honeyeater), this protein is Cytochrome b (MT-CYB).